The chain runs to 141 residues: Hemoglobin subunit alpha (141 aa).

The 141-residue stretch at 1–141 folds into the Globin domain; sequence VLSPADKSNV…VSTVLTSKYR (141 aa). Phosphoserine is present on Ser-3. An N6-succinyllysine mark is found at Lys-7 and Lys-11. Lys-16 carries the post-translational modification N6-acetyllysine; alternate. An N6-succinyllysine; alternate modification is found at Lys-16. The residue at position 24 (Tyr-24) is a Phosphotyrosine. Ser-35 carries the phosphoserine modification. Lys-40 is subject to N6-succinyllysine. Ser-49 carries the post-translational modification Phosphoserine. His-58 is an O2 binding site. His-87 contacts heme b. Position 102 is a phosphoserine (Ser-102). Thr-108 bears the Phosphothreonine mark. 2 positions are modified to phosphoserine: Ser-124 and Ser-131. Residues Thr-134 and Thr-137 each carry the phosphothreonine modification. Ser-138 is modified (phosphoserine).

This sequence belongs to the globin family. In terms of assembly, heterotetramer of two alpha chains and two beta chains. As to expression, red blood cells.

Functionally, involved in oxygen transport from the lung to the various peripheral tissues. In terms of biological role, hemopressin acts as an antagonist peptide of the cannabinoid receptor CNR1. Hemopressin-binding efficiently blocks cannabinoid receptor CNR1 and subsequent signaling. This Saguinus mystax (Moustached tamarin) protein is Hemoglobin subunit alpha (HBA).